Here is a 601-residue protein sequence, read N- to C-terminus: Elongation factor 4 (601 aa).

A tr-type G domain is found at 8–189; sequence EQIRNFGIIA…LIVRKAPPPK (182 aa). Position 20 to 25 (20 to 25) interacts with GTP; sequence DHGKST.

This sequence belongs to the TRAFAC class translation factor GTPase superfamily. Classic translation factor GTPase family. LepA subfamily.

It is found in the cell membrane. The enzyme catalyses GTP + H2O = GDP + phosphate + H(+). Its function is as follows. Required for accurate and efficient protein synthesis under certain stress conditions. May act as a fidelity factor of the translation reaction, by catalyzing a one-codon backward translocation of tRNAs on improperly translocated ribosomes. Back-translocation proceeds from a post-translocation (POST) complex to a pre-translocation (PRE) complex, thus giving elongation factor G a second chance to translocate the tRNAs correctly. Binds to ribosomes in a GTP-dependent manner. This Tropheryma whipplei (strain TW08/27) (Whipple's bacillus) protein is Elongation factor 4.